Here is a 361-residue protein sequence, read N- to C-terminus: Putative agmatine deiminase (361 aa).

Cysteine 354 acts as the Amidino-cysteine intermediate in catalysis.

It belongs to the agmatine deiminase family.

The catalysed reaction is agmatine + H2O = N-carbamoylputrescine + NH4(+). This is Putative agmatine deiminase from Streptococcus pneumoniae (strain Taiwan19F-14).